Consider the following 1040-residue polypeptide: DIS3-like exonuclease 1 (1040 aa).

One can recognise a CSD1 domain in the interval 232–310 (AGIKSGRYKQ…KGRTGALCEN (79 aa)). One can recognise a CSD2 domain in the interval 360–426 (VLVMPWDYRI…AEIATILVEN (67 aa)). Positions 459–808 (RLDLRETHLV…VHRLLLAAVN (350 aa)) constitute an RNB domain.

The protein belongs to the RNR ribonuclease family. In terms of assembly, component of the RNA exosome complex. Requires Mg(2+) as cofactor.

Its subcellular location is the cytoplasm. It carries out the reaction Exonucleolytic cleavage in the 3'- to 5'-direction to yield nucleoside 5'-phosphates.. Functionally, catalytic component of the RNA exosome complex which has 3'-&gt;5' exoribonuclease activity and participates in a multitude of cellular RNA processing and degradation events. The chain is DIS3-like exonuclease 1 (dis3l) from Xenopus laevis (African clawed frog).